The following is a 513-amino-acid chain: OBERON-like protein (513 aa).

Residues 166-235 form a PHD-type zinc finger; sequence NGFCNLCMCV…VFRCQACSXT (70 aa). Residues 372 to 469 are a coiled coil; it reads RELADKAREA…LYEKIKLQES (98 aa). Residues 493–513 form a disordered region; it reads YNGPPKADSQSNDCHPFRTNP. A compositionally biased stretch (polar residues) spans 500-513; the sequence is DSQSNDCHPFRTNP.

As to quaternary structure, self-interacts and probably forms heteromers. Binds to VPg of pea seed borne mosaic virus (PSbMV), turnip mosaic virus (TuMV) and lettuce mosaic virus (LMV), but not with VPg of tobacco etch virus (TEV), cowpea mosaic virus (CPMV), tomato black ring virus (TBRV) and grapevine fan leaf virus (GFLV).

It is found in the nucleus. Its function is as follows. Required for the maintenance and/or establishment of both the shoot and root meristems, probably by controlling the expression of the meristem genes and of genes required for auxin responses. Involved in the development of the basal pole and in auxin-mediated root and vascular development in the embryo. Confers sensitivity to turnip mosaic virus (TuMV) probably by promoting viral movement and multiplication via interaction with TuMV VPg. The protein is OBERON-like protein (PVIP) of Pisum sativum (Garden pea).